The following is a 454-amino-acid chain: Sensor histidine kinase RppB (454 aa).

Residues 1-13 lie on the Periplasmic side of the membrane; that stretch reads MNTRRLFARSRLQ. Residues 14–34 form a helical membrane-spanning segment; sequence LAFWYALVMGGILTLLGLGVY. Residues 35–186 lie on the Cytoplasmic side of the membrane; sequence RAIVQANWMA…LAAFDAENKR (152 aa). A helical membrane pass occupies residues 187–207; it reads ILWILGLSFPIALGLVAFSSW. At 208 to 454 the chain is on the periplasmic side; sequence GLAGLAMRPI…PIFSVPIVHS (247 aa). One can recognise a Histidine kinase domain in the interval 230-448; that stretch reads NAAHELRSPL…LFTIQLPIFS (219 aa). A Phosphohistidine; by autocatalysis modification is found at H233.

The protein localises to the cell inner membrane. The enzyme catalyses ATP + protein L-histidine = ADP + protein N-phospho-L-histidine.. Functionally, member of two-component regulatory system RppA/RppB, involved in the establishment of the appropriate stoichiometry between the 2 photosystems. It senses changes in the plastoquinone (PQ) redox poise. Another group shows this two-component pair, renamed NrsR/NrsS, controls the nickel-dependent expression of the nrsBACD operon; they suggest the photosystem-related activities seen earlier are due to the expression of NrsS (RppB) in the absence of its natural substrate NrsR (RppA). This Synechocystis sp. (strain ATCC 27184 / PCC 6803 / Kazusa) protein is Sensor histidine kinase RppB.